A 138-amino-acid chain; its full sequence is Large ribosomal subunit protein eL32 (138 aa).

Belongs to the eukaryotic ribosomal protein eL32 family.

This is Large ribosomal subunit protein eL32 from Saccharolobus islandicus (strain Y.N.15.51 / Yellowstone #2) (Sulfolobus islandicus).